The sequence spans 129 residues: M-zodatoxin-Lt8a (129 aa).

The first 20 residues, 1–20, serve as a signal peptide directing secretion; sequence MKYFVVALALVAAFACIAES. The propeptide occupies 21-60; it reads KPAESEHELAEVEEENELADLEDAVWLEHLADLSDLEEAR. Residues 57–60 carry the Processing quadruplet motif motif; that stretch reads EEAR.

Belongs to the cationic peptide 06 (cytoinsectotoxin) family. Post-translationally, cleavage of the propeptide depends on the processing quadruplet motif (XXXR, with at least one of X being E). In terms of tissue distribution, expressed by the venom gland.

It is found in the secreted. Insecticidal, cytolytic and antimicrobial peptide. Has insecticidal activity against the flesh fly S.carnaria, and against the cockroach N.cinerea. Has insecticidal activity against D.melanogaster. Has hemolytic activity against human erythrocytes (EC(50)=6 uM). Has cytolytic activity against insect Sf9 cells (EC(50)=1 uM) and human leukocytes (EC(50)=3 uM). Has antibacterial activity against the Gram-positive bacteria A.globiformis VKM Ac-1112 (MIC=0.5 uM), and B.subtilis VKM B-501 (MIC=0.6-0.9 uM), and against the Gram-negative bacteria E.coli C600 (MIC=0.5 uM), E.coli DH5alpha (MIC=0.9 uM), E.coli MH1 (MIC=0.5 uM), P.aeruginosa PAO1 (MIC=1.9 uM), and P.fluorescens VKM B-894 (MIC=3.8 uM). Lacks antimicrobial activity against the Gram-positive bacteria M.luteus and S.aureus, and against the Gram-negative bacterium S.marcescens. Forms voltage-dependent, ion-permeable channels in membranes. At high concentration causes cell membrane lysis. The chain is M-zodatoxin-Lt8a (cit 1-1) from Lachesana tarabaevi (Spider).